The following is a 118-amino-acid chain: Hisactophilin-2 (118 aa).

Gly2 carries N-myristoyl glycine lipidation. Residues 8 to 109 (AHNGHYLSAE…HVSTSHHHDH (102 aa)) are contains several HHXH repeats. A run of 2 repeats spans residues 34-46 (FHIE…VALR) and 74-86 (FHLE…VSIK). Residues 34–86 (FHIENHGSKVALRTHCGKYVSIGDHKQVYLSHHLHGDHSLFHLEHHHGKVSIK) are 2 X 13 AA approximate repeats. The interval 99–118 (GHVSTSHHHDHHATFEEHIL) is disordered.

This sequence belongs to the hisactophilin family. In terms of assembly, homodimer or heterodimer of hatA and hatB, linked by a disulfide bond. In terms of processing, phosphorylated.

It localises to the cytoplasm. It is found in the cell membrane. Its function is as follows. May act as an intracellular pH sensor that links chemotactic signals to responses in the microfilament system of the cells by nucleating actin polymerization or stabilizing the filaments. In Dictyostelium discoideum (Social amoeba), this protein is Hisactophilin-2 (hatB).